A 396-amino-acid polypeptide reads, in one-letter code: 8-amino-7-oxononanoate synthase (396 aa).

Arginine 21 provides a ligand contact to substrate. 112–113 (GY) is a pyridoxal 5'-phosphate binding site. Residue histidine 137 coordinates substrate. Residues serine 183, histidine 211, and threonine 239 each contribute to the pyridoxal 5'-phosphate site. Position 242 is an N6-(pyridoxal phosphate)lysine (lysine 242). Position 358 (threonine 358) interacts with substrate.

It belongs to the class-II pyridoxal-phosphate-dependent aminotransferase family. BioF subfamily. As to quaternary structure, homodimer. Requires pyridoxal 5'-phosphate as cofactor.

The enzyme catalyses 6-carboxyhexanoyl-[ACP] + L-alanine + H(+) = (8S)-8-amino-7-oxononanoate + holo-[ACP] + CO2. It functions in the pathway cofactor biosynthesis; biotin biosynthesis. Catalyzes the decarboxylative condensation of pimeloyl-[acyl-carrier protein] and L-alanine to produce 8-amino-7-oxononanoate (AON), [acyl-carrier protein], and carbon dioxide. This chain is 8-amino-7-oxononanoate synthase, found in Bordetella petrii (strain ATCC BAA-461 / DSM 12804 / CCUG 43448).